The primary structure comprises 298 residues: Enoyl-CoA hydratase AKT6-1 (298 aa).

The interval M1 to N23 is disordered.

This sequence belongs to the enoyl-CoA hydratase/isomerase family.

The protein operates within mycotoxin biosynthesis. Its function is as follows. Enoyl-CoA hydratase; part of the gene clusters that mediate the biosynthesis of the host-selective toxins (HSTs) AK-toxins responsible for Japanese pear black spot disease by the Japanese pear pathotype. AK-toxins are esters of 9,10-epoxy 8-hydroxy 9-methyldecatrienoic acid (EDA). On cellular level, AK-toxins affect plasma membrane of susceptible cells and cause a sudden increase in loss of K(+) after a few minutes of toxin treatment. The acyl-CoA ligase AKT1, the hydrolase AKT2 and enoyl-CoA hydratase AKT3 are all involved in the biosynthesis of the AK-, AF- and ACT-toxin common 9,10-epoxy-8-hydroxy-9-methyl-decatrienoic acid (EDA) structural moiety. Part of the EDA biosynthesis occurs in the peroxisome since these 3 enzymes are localized in peroxisomes. The exact roles of the 3 enzymes, as well as of additional AK-toxin clusters enzymes, including AKT4, AKT6 and AKTS1, have still to be elucidated. The Cytochrome P450 monooxygenase AKT7 on the other side functions to limit production of EDA and AK-toxin, probably via the catalysis of a side reaction of EDA or its precursor. In Alternaria alternata (Alternaria rot fungus), this protein is Enoyl-CoA hydratase AKT6-1.